The following is a 187-amino-acid chain: V-type ATP synthase subunit E (187 aa).

It belongs to the V-ATPase E subunit family.

In terms of biological role, produces ATP from ADP in the presence of a proton gradient across the membrane. The sequence is that of V-type ATP synthase subunit E from Clostridioides difficile (strain 630) (Peptoclostridium difficile).